The following is an 841-amino-acid chain: Follistatin-related protein 4 (841 aa).

The N-terminal stretch at 1 to 22 is a signal peptide; that stretch reads MKPGGFWPHLALLGVSLPAVLG. The interval 29-54 is disordered; it reads SRSPNMVPGESQAEETRGFEVTRREG. Residues 42–54 are compositionally biased toward basic and acidic residues; sequence EETRGFEVTRREG. The Kazal-like domain occupies 80–134; sequence TTGQPSCQCLEVCRPRYMPVCGSDGRLYGNHCELRRAACLLGKRIVSVHSKDCFL. 3 cysteine pairs are disulfide-bonded: Cys86-Cys118, Cys92-Cys111, and Cys100-Cys132. 2 consecutive EF-hand domains span residues 173–208 and 225–247; these read QKRL…EQDM and DYNS…IQLS. Ca(2+)-binding residues include Asp186, Asp188, Asn190, His192, Glu197, Asp225, Asn227, Asp229, Ser231, and Glu236. 2 Ig-like domains span residues 250 to 336 and 340 to 425; these read PEDK…VLQV and PVIR…EDIS. 2 cysteine pairs are disulfide-bonded: Cys269-Cys320 and Cys361-Cys412. An N-linked (GlcNAc...) asparagine glycan is attached at Asn317.

It localises to the secreted. This chain is Follistatin-related protein 4 (Fstl4), found in Mus musculus (Mouse).